Reading from the N-terminus, the 552-residue chain is Non-structural protein NS1 (552 aa).

It belongs to the orbivirus non-structural protein NS1 family.

The sequence is that of Non-structural protein NS1 (Segment-5) from Bluetongue virus 1 (isolate Australia) (BTV 1).